A 1184-amino-acid chain; its full sequence is Calcium-activated potassium channel subunit alpha-1a (1184 aa).

Residues 1–39 lie on the Extracellular side of the membrane; the sequence is MSNNINFNKNPDSSVSISKMDVIIPFTPDVPCDNNGQRM. A helical transmembrane segment spans residues 40–60; that stretch reads WWAFLASSMVTFFGGLFIILL. At 61–132 the chain is on the cytoplasmic side; the sequence is WRTLKYLWTV…MISAQTLTGR (72 aa). S-palmitoyl cysteine attachment occurs at residues Cys-71, Cys-72, and Cys-74. Residues 133-153 form a helical membrane-spanning segment; sequence VLVVLVFALSIGALGIYFIDS. At 154 to 168 the chain is on the extracellular side; it reads SDPIESCQNFYKDFT. Residues 169–189 form a helical membrane-spanning segment; sequence LQIDMAFNVFFLLYFGLRFIA. Topologically, residues 190-193 are cytoplasmic; that stretch reads ANDK. Residues 194–214 form a helical membrane-spanning segment; it reads LWFWLEVNSVVDFFTVPPVFV. Topologically, residues 215–254 are extracellular; that stretch reads SVYLNRSWLGLRFLRALRLIQFSEILQFLNILKTSNSIKL. A helical membrane pass occupies residues 255 to 275; it reads VNLCSIFISTWLTAAGFIHLV. The Cytoplasmic portion of the chain corresponds to 276–289; that stretch reads ENSGDPWENFQNSQ. The chain crosses the membrane as a helical span at residues 290–310; sequence PLSYWECVYLLMVTMSTVGYG. The Extracellular segment spans residues 311-321; that stretch reads DVYARTTLGRL. Residues 322-342 traverse the membrane as a helical segment; it reads FMVFFILGGLAMFASYVPEII. The Cytoplasmic portion of the chain corresponds to 343–1184; it reads ELIGNRKKYG…PPIREVEDEC (842 aa). Residues 361–503 form the RCK N-terminal 1 domain; that stretch reads RKHIVVCGHI…WNWKEGDDAI (143 aa). 3 residues coordinate Mg(2+): Glu-393, Gln-416, and Glu-418. Asn-468 contributes to the Ca(2+) binding site. The interval 655 to 677 is disordered; that stretch reads EHPSTLSPKKKQRNGGMRNSPNC. Position 659 is a phosphothreonine (Thr-659). Ser-661, Ser-674, and Ser-678 each carry phosphoserine. An RCK N-terminal 2 domain is found at 735–879; it reads SGHVVVCIFG…MDRSSPDNSP (145 aa). Thr-866 carries the phosphothreonine modification. A phosphoserine mark is found at Ser-874 and Ser-878. The Ca(2+) site is built by Gln-908, Asp-911, Asp-914, and Asp-916. A Calcium bowl motif is present at residues 908 to 916; that stretch reads QFLDQDDDD. A disordered region spans residues 1082–1143; that stretch reads RASLSHSSHS…PEKRWFTDEA (62 aa). Residues 1084–1104 are compositionally biased toward low complexity; sequence SLSHSSHSSHSSSKKSSSVHS. The span at 1116-1125 shows a compositional bias: basic and acidic residues; that stretch reads KAREARDKQN.

It belongs to the potassium channel family. Calcium-activated (TC 1.A.1.3) subfamily. KCa1.1/KCNMA1 sub-subfamily. In terms of assembly, homotetramer; which constitutes the calcium-activated potassium channel. In terms of processing, phosphorylated. Palmitoylated.

The protein localises to the cell membrane. It carries out the reaction K(+)(in) = K(+)(out). In terms of biological role, potassium channel activated by both membrane depolarization or increase in cytosolic Ca(2+) that mediates export of K(+). It is also activated by the concentration of cytosolic Mg(2+). Its activation dampens the excitatory events that elevate the cytosolic Ca(2+) concentration and/or depolarize the cell membrane. It therefore contributes to repolarization of the membrane potential. Involved in determining peripheral auditory sensitivity. The protein is Calcium-activated potassium channel subunit alpha-1a of Danio rerio (Zebrafish).